We begin with the raw amino-acid sequence, 202 residues long: Glycerol-3-phosphate acyltransferase (202 aa).

Helical transmembrane passes span 1–21 (MTLIALILPAYLLGSISFGVL), 84–104 (AVAAAALGVFLGHLFPVFLHF), 116–136 (ILLGFNPWMGLLAATIWLAVA), and 143–163 (SLAAIVAASLAPFYALFFLGF).

The protein belongs to the PlsY family. In terms of assembly, probably interacts with PlsX.

Its subcellular location is the cell inner membrane. The catalysed reaction is an acyl phosphate + sn-glycerol 3-phosphate = a 1-acyl-sn-glycero-3-phosphate + phosphate. The protein operates within lipid metabolism; phospholipid metabolism. In terms of biological role, catalyzes the transfer of an acyl group from acyl-phosphate (acyl-PO(4)) to glycerol-3-phosphate (G3P) to form lysophosphatidic acid (LPA). This enzyme utilizes acyl-phosphate as fatty acyl donor, but not acyl-CoA or acyl-ACP. This chain is Glycerol-3-phosphate acyltransferase, found in Nitrosospira multiformis (strain ATCC 25196 / NCIMB 11849 / C 71).